A 330-amino-acid chain; its full sequence is Urokinase plasminogen activator surface receptor (330 aa).

An N-terminal signal peptide occupies residues 1 to 20 (MGQPLLLLLLVYTYIPGSWG). UPAR/Ly6 domains lie at 21 to 112 (LRCL…RNRY), 113 to 208 (LECA…PPNG), and 209 to 300 (LQCY…PGKG). 3 disulfides stabilise this stretch: C23–C44, C26–C32, and C37–C65. N-linked (GlcNAc...) asparagine glycosylation is present at N28. N-linked (GlcNAc...) asparagine glycosylation is present at N72. 11 disulfide bridges follow: C91/C96, C115/C142, C118/C125, C135/C164, C170/C187, C188/C193, C211/C239, C214/C222, C232/C258, C264/C282, and C283/C288. N-linked (GlcNAc...) asparagine glycosylation is found at N179 and N189. Residue N279 is glycosylated (N-linked (GlcNAc...) asparagine). Residue G300 is the site of GPI-anchor amidated glycine attachment. A propeptide spans 301–330 (GAPKTSPAHLSFFVSLLLTARLWGATLLCT) (removed in mature form).

Monomer. Interacts (via the UPAR/Ly6 domains) with SRPX2. Interacts with MRC2. Interacts with SORL1 (via N-terminal ectodomain); this interaction decreases PLAUR internalization. The ternary complex composed of PLAUR-PLAU-SERPINE1 also interacts with SORL1. Interacts with CD82; this interaction prevents PLAUR from binding to its high affinity ligand PLAU.

It localises to the cell membrane. In terms of biological role, acts as a receptor for urokinase plasminogen activator. Plays a role in localizing and promoting plasmin formation. Mediates the proteolysis-independent signal transduction activation effects of U-PA. The chain is Urokinase plasminogen activator surface receptor (PLAUR) from Bos taurus (Bovine).